A 356-amino-acid chain; its full sequence is S-adenosylmethionine:tRNA ribosyltransferase-isomerase (356 aa).

Belongs to the QueA family. As to quaternary structure, monomer.

The protein localises to the cytoplasm. The enzyme catalyses 7-aminomethyl-7-carbaguanosine(34) in tRNA + S-adenosyl-L-methionine = epoxyqueuosine(34) in tRNA + adenine + L-methionine + 2 H(+). Its pathway is tRNA modification; tRNA-queuosine biosynthesis. Functionally, transfers and isomerizes the ribose moiety from AdoMet to the 7-aminomethyl group of 7-deazaguanine (preQ1-tRNA) to give epoxyqueuosine (oQ-tRNA). The sequence is that of S-adenosylmethionine:tRNA ribosyltransferase-isomerase from Shigella boydii serotype 4 (strain Sb227).